Reading from the N-terminus, the 321-residue chain is N-acetyl-gamma-glutamyl-phosphate reductase (321 aa).

Cys131 is a catalytic residue.

This sequence belongs to the NAGSA dehydrogenase family. Type 1 subfamily.

It is found in the cytoplasm. The catalysed reaction is N-acetyl-L-glutamate 5-semialdehyde + phosphate + NADP(+) = N-acetyl-L-glutamyl 5-phosphate + NADPH + H(+). Its pathway is amino-acid biosynthesis; L-arginine biosynthesis; N(2)-acetyl-L-ornithine from L-glutamate: step 3/4. Its function is as follows. Catalyzes the NADPH-dependent reduction of N-acetyl-5-glutamyl phosphate to yield N-acetyl-L-glutamate 5-semialdehyde. The sequence is that of N-acetyl-gamma-glutamyl-phosphate reductase from Christiangramia forsetii (strain DSM 17595 / CGMCC 1.15422 / KT0803) (Gramella forsetii).